A 304-amino-acid polypeptide reads, in one-letter code: Ribonuclease BN (304 aa).

Zn(2+) contacts are provided by His-63, His-65, Asp-67, His-68, His-140, Asp-211, and His-269. Catalysis depends on Asp-67, which acts as the Proton acceptor.

Belongs to the RNase Z family. RNase BN subfamily. In terms of assembly, homodimer. Zn(2+) is required as a cofactor.

Zinc phosphodiesterase, which has both exoribonuclease and endoribonuclease activities. The chain is Ribonuclease BN from Erwinia tasmaniensis (strain DSM 17950 / CFBP 7177 / CIP 109463 / NCPPB 4357 / Et1/99).